The following is a 172-amino-acid chain: R-phycocyanin beta chain (172 aa).

Positions 35 and 39 each coordinate (2R,3E)-phycoerythrobilin. Residues asparagine 72, cysteine 82, and 84–85 (RD) contribute to the (2R,3E)-phycocyanobilin site. At asparagine 72 the chain carries N4-methylasparagine. Residues 149–151 (PAG) and cysteine 153 each bind (2R,3E)-phycoerythrobilin.

Belongs to the phycobiliprotein family. Heterododecamer of 6 alpha and 6 beta chains. The basic functional unit of phycobiliproteins is a ring-shaped hexamer formed from two back-to-back trimers contacting via the alpha chain subunits. The trimers are composed of alpha/beta subunit heterodimers arranged around a three-fold axis of symmetry. The phycoerythrins also contain a gamma subunit which is located in the center of the hexamer. Contains one covalently linked phycocyanobilin chromophore and one covalently linked phycoerythrobilin chromophore.

It localises to the plastid. Its subcellular location is the chloroplast thylakoid membrane. Functionally, light-harvesting photosynthetic tetrapyrrole chromophore-protein from the phycobiliprotein complex (phycobilisome, PBS). Phycocyanin is the major phycobiliprotein in the PBS rod. The protein is R-phycocyanin beta chain (rpcB) of Polysiphonia urceolata (Red alga).